The following is a 305-amino-acid chain: MSTDKKQSNFAIDFLMGGVSAAVSKTAAAPIERVKLLIQNQDEMIKQGSLDRRYTGIVECFKRTAADEGVASFWRGNTANVIRYFPTQALNFAFKDKIKAMFGFKKEEGYAKWFAGNLASGGLAGGLSLLFVYSLDYARTRLAADSKSAKKGGERQFNGLVDVYKKTLASDGVAGLYRGFLPSVVGIVVYRGLYFGLYDSLKPLLLTGSLENSFLASFLLGWAVTTGASTASYPLDTVRRRMMMTSGQAVKYDGAFDAFRKIVAAEGIKSLFKGCGANILRGVAGAGVISMYDQLQVILFGKTFK.

3 Solcar repeats span residues 8 to 101 (SNFA…IKAM), 112 to 204 (KWFA…LKPL), and 212 to 298 (NSFL…LQVI). Transmembrane regions (helical) follow at residues 10-37 (FAID…VKLL), 78-102 (TANV…KAMF), 110-130 (YAKW…LSLL), 180-201 (FLPS…YDSL), and 215-235 (LASF…SYPL). ADP is bound by residues Arg83 and Lys95. Arg239 is an ADP binding site. The interval 239-244 (RRRMMM) is important for transport activity. The Nucleotide carrier signature motif signature appears at 239 to 244 (RRRMMM). Residues 275-295 (CGANILRGVAGAGVISMYDQL) traverse the membrane as a helical segment.

Belongs to the mitochondrial carrier (TC 2.A.29) family. As to quaternary structure, monomer.

It is found in the mitochondrion inner membrane. The catalysed reaction is ADP(in) + ATP(out) = ADP(out) + ATP(in). The matrix-open state (m-state) is inhibited by the membrane-permeable bongkrekic acid (BKA). The cytoplasmic-open state (c-state) is inhibited by the membrane-impermeable toxic inhibitor carboxyatractyloside (CATR). Functionally, ADP:ATP antiporter that mediates import of ADP into the mitochondrial matrix for ATP synthesis, and export of ATP out to fuel the cell. Cycles between the cytoplasmic-open state (c-state) and the matrix-open state (m-state): operates by the alternating access mechanism with a single substrate-binding site intermittently exposed to either the cytosolic (c-state) or matrix (m-state) side of the inner mitochondrial membrane. This chain is ADP,ATP carrier protein (AAC), found in Kluyveromyces lactis (strain ATCC 8585 / CBS 2359 / DSM 70799 / NBRC 1267 / NRRL Y-1140 / WM37) (Yeast).